The following is a 355-amino-acid chain: Transcription factor TGAL9 (355 aa).

Disordered regions lie at residues 83 to 104 (FPSQ…MAAI) and 118 to 188 (GSSK…DAKT). The segment covering 118–134 (GSSKRPPAAAAAGGQPS) has biased composition (low complexity). Residues 135–144 (RLNNPADQPS) show a composition bias toward polar residues. Basic and acidic residues-rich tracts occupy residues 148–159 (KDGKAAVVKKEG) and 176–188 (SEHE…DAKT). In terms of domain architecture, bZIP spans 185–230 (DAKTLRRLAQNREAARKSRLRKKAYIQNLETSRIRLSQLEQELVQR). The segment at 187-207 (KTLRRLAQNREAARKSRLRKK) is basic motif. Positions 213–227 (LETSRIRLSQLEQEL) are leucine-zipper. Residues 254–355 (AAWFDGEYAR…RPSELIKVST (102 aa)) enclose the DOG1 domain.

Belongs to the bZIP family. Interacts with NPR5/NH4, NH5.1 and NH5.2.

Its subcellular location is the nucleus. Transcriptional regulator involved in defense response. This Oryza sativa subsp. japonica (Rice) protein is Transcription factor TGAL9.